The sequence spans 57 residues: UPF0391 membrane protein RPE_2138 (57 aa).

The next 2 helical transmembrane spans lie at 4–24 (WVVT…GGIA) and 30–50 (IAKI…VIGL).

Belongs to the UPF0391 family.

Its subcellular location is the cell membrane. In Rhodopseudomonas palustris (strain BisA53), this protein is UPF0391 membrane protein RPE_2138.